A 619-amino-acid chain; its full sequence is MSKGTTSQDAPFGTLLGYAPGGVAIYSSDYSSLDPQEYEDDAVFRSYIDDEYMGHKWQCVEFARRFLFLNYGVVFTDVGMAWEIFSLRFLREVVNDNILPLQAFPNGSPRAPVAGALLIWDKGGEFKDTGHVAIITQLHGNKVRIAEQNVIHSPLPQGQQWTRELEMVVENGCYTLKDTFDDTTILGWMIQTEDTEYSLPQPEIAGELLKISGARLENKGQFDGKWLDEKDPLQNAYVQANGQVINQDPYHYYTITESAEQELIKATNELHLMYLHATDKVLKDDNLLALFDIPKILWPRLRLSWQRRRHHMITGRMDFCMDERGLKVYEYNADSASCHTEAGLILERWAEQGYKGNGFNPAEGLINELAGAWKHSRARPFVHIMQDKDIEENYHAQFMEQALHQAGFETRILRGLDELGWDAAGQLIDGEGRLVNCVWKTWAWETAFDQIREVSDREFAAVPIRTGHPQNEVRLIDVLLRPEVLVFEPLWTVIPGNKAILPILWSLFPHHRYLLDTDFTVNDELVKTGYAVKPIAGRCGSNIDLVSHHEEVLDKTSGKFAEQKNIYQQLWCLPKVDGKYIQVCTFTVGGNYGGTCLRGDESLVIKKESDIEPLIVVKK.

The segment at 2 to 195 is gsp amidase; that stretch reads SKGTTSQDAP…LGWMIQTEDT (194 aa). Positions 34–176 constitute a Peptidase C51 domain; that stretch reads DPQEYEDDAV…MVVENGCYTL (143 aa). Gln58 is a glutathionylspermidine binding site. Catalysis depends on Cys59, which acts as the S-(gamma-glutamyl-cysteinyl-glycyl)-cysteine intermediate. A Cysteine sulfenic acid (-SOH); transient modification is found at Cys59. Glutathionylspermidine-binding positions include Arg64, 78 to 81, and Asn149; that span reads VGMA. The interval 196 to 205 is linker; it reads EYSLPQPEIA. The gsp synthetase stretch occupies residues 206 to 619; the sequence is GELLKISGAR…DIEPLIVVKK (414 aa). Arg316 contributes to the glutathione binding site. Residue 316 to 318 coordinates ATP; sequence RMD. Residues Asp318, Glu330, and Asn332 each coordinate Mg(2+). Position 335 (Ser335) interacts with glutathione. Residue Glu391 coordinates spermidine. 2 residues coordinate glutathione: Glu392 and Thr446. ATP is bound by residues Lys498, Lys533, 539–540, 568–571, Gln582, and 603–605; these read CG, QQLW, and LVI. Asp610 contributes to the spermidine binding site.

It in the C-terminal section; belongs to the glutathionylspermidine synthase preATP-grasp family. Homodimer. Oxidation of Cys-59 to sulfenic acid during oxidative stress selectively inhibits the amidase activity which leads to a rapid increase in the amounts of intracellular Gsp and Gsp S-thiolated proteins (GspSSPs).

The catalysed reaction is spermidine + glutathione + ATP = glutathionylspermidine + ADP + phosphate + H(+). It carries out the reaction glutathionylspermidine + H2O = spermidine + glutathione. The protein operates within sulfur metabolism; glutathione metabolism. It participates in amine and polyamine metabolism; spermidine metabolism. With respect to regulation, when exposed to oxidative stress, Gsp amidase activity is transiently inhibited in vivo by oxidation of the catalytic Cys-59 thiol to sulfenic acid; this modification does not affect Gsp synthetase activity. Gsp amidase activity is negatively autoregulated by the Gsp synthetase domain, and is activated by the Gsp synthetase substrates, GSH and ATP-Mg(2+); the occupancy of the synthetase active site may initiate communication through the protein as manifest by the release of inhibition of the amidase activity. A tetrahedral phosphonate analog of glutathionylspermidine, designed as a mimic of the proposed tetrahedral intermediate for either reaction, inhibits the synthetase activity (Ki of 10 uM) but does not inhibit the amidase activity. Amidase activity is inhibited by iodoacetamide in vitro. Catalyzes the formation of an amide bond between glutathione (GSH) and spermidine coupled with hydrolysis of ATP; also catalyzes the opposing reaction, i.e. the hydrolysis of glutathionylspermidine (Gsp) back to glutathione and spermidine. The amidase active site can also hydrolyze Gsp-disulfide (Gsp-S-S-Gsp) to Gsp-SG and Gsp S-thiolated proteins (GspSSPs) to GSH S-thiolated protein (GSSPs). Likely acts synergistically with glutaredoxin to regulate the redox environment of E.coli and defend against oxidative damage. In vitro, the amidase active site also catalyzes hydrolysis of amide and ester derivatives of glutathione (e.g. glutathione ethyl ester and glutathione amide) but lacks activity toward acetylspermidine (N1 and N8) and acetylspermine (N1). This is Bifunctional glutathionylspermidine synthetase/amidase (gss) from Escherichia coli (strain K12).